Consider the following 187-residue polypeptide: dCTP deaminase (187 aa).

Residues 107 to 112 (KSTYAR), 131 to 133 (TLE), Q152, Y166, K175, and Q176 contribute to the dCTP site. The active-site Proton donor/acceptor is E133.

It belongs to the dCTP deaminase family. Homotrimer.

The enzyme catalyses dCTP + H2O + H(+) = dUTP + NH4(+). It functions in the pathway pyrimidine metabolism; dUMP biosynthesis; dUMP from dCTP (dUTP route): step 1/2. Its function is as follows. Catalyzes the deamination of dCTP to dUTP. This is dCTP deaminase from Ehrlichia canis (strain Jake).